The chain runs to 150 residues: MRVVIQRVTEASVSIRGALHSRIGQGVLILVGIEDRDGESDIELLTSKISNLRIFDDSEGVMNLSVKDINGEALVVSQFTLMGSTRKGNRPSYIKASRPEIAIPLYESFCNSLSAKLGKAVRQGVFGADMQVALVNDGPVTILIDTHNKE.

Positions 138 to 139 (GP) match the Gly-cisPro motif, important for rejection of L-amino acids motif.

Belongs to the DTD family. As to quaternary structure, homodimer.

Its subcellular location is the cytoplasm. The catalysed reaction is glycyl-tRNA(Ala) + H2O = tRNA(Ala) + glycine + H(+). It carries out the reaction a D-aminoacyl-tRNA + H2O = a tRNA + a D-alpha-amino acid + H(+). In terms of biological role, an aminoacyl-tRNA editing enzyme that deacylates mischarged D-aminoacyl-tRNAs. Also deacylates mischarged glycyl-tRNA(Ala), protecting cells against glycine mischarging by AlaRS. Acts via tRNA-based rather than protein-based catalysis; rejects L-amino acids rather than detecting D-amino acids in the active site. By recycling D-aminoacyl-tRNA to D-amino acids and free tRNA molecules, this enzyme counteracts the toxicity associated with the formation of D-aminoacyl-tRNA entities in vivo and helps enforce protein L-homochirality. This chain is D-aminoacyl-tRNA deacylase, found in Porphyromonas gingivalis (strain ATCC 33277 / DSM 20709 / CIP 103683 / JCM 12257 / NCTC 11834 / 2561).